We begin with the raw amino-acid sequence, 192 residues long: Large ribosomal subunit protein uL10 (192 aa).

This sequence belongs to the universal ribosomal protein uL10 family. As to quaternary structure, part of the ribosomal stalk of the 50S ribosomal subunit. The N-terminus interacts with L11 and the large rRNA to form the base of the stalk. The C-terminus forms an elongated spine to which L12 dimers bind in a sequential fashion forming a multimeric L10(L12)X complex.

In terms of biological role, forms part of the ribosomal stalk, playing a central role in the interaction of the ribosome with GTP-bound translation factors. This chain is Large ribosomal subunit protein uL10, found in Gloeobacter violaceus (strain ATCC 29082 / PCC 7421).